Here is a 206-residue protein sequence, read N- to C-terminus: RNA pyrophosphohydrolase (206 aa).

The region spanning 6–149 (GYRPNVGIVL…KRGVYARALR (144 aa)) is the Nudix hydrolase domain. A Nudix box motif is present at residues 38-59 (GGMNTDETPVEAMYRELQEETG). Residues 175–206 (MPGHTAGHDRPRKRPRSRGYWPKKAQGDVPPT) are disordered.

The protein belongs to the Nudix hydrolase family. RppH subfamily. Requires a divalent metal cation as cofactor.

Accelerates the degradation of transcripts by removing pyrophosphate from the 5'-end of triphosphorylated RNA, leading to a more labile monophosphorylated state that can stimulate subsequent ribonuclease cleavage. This is RNA pyrophosphohydrolase from Stenotrophomonas maltophilia (strain R551-3).